We begin with the raw amino-acid sequence, 97 residues long: Acylphosphatase (97 aa).

One can recognise an Acylphosphatase-like domain in the interval 9–95; sequence TRHLRIHGLV…CDAQGFEQRE (87 aa). Active-site residues include Arg-24 and Asn-42.

It belongs to the acylphosphatase family.

The enzyme catalyses an acyl phosphate + H2O = a carboxylate + phosphate + H(+). The chain is Acylphosphatase (acyP) from Acidovorax sp. (strain JS42).